A 623-amino-acid polypeptide reads, in one-letter code: Chaperone protein HtpG (623 aa).

Positions 1-330 are a; substrate-binding; the sequence is MIMTQEKKKF…SEDLPLNISR (330 aa). Positions 331-546 are b; the sequence is ESLQHNSVLE…DAAMDIRMER (216 aa). A disordered region spans residues 477 to 497; the sequence is SDIDVEQTTSQSEEKNTDSKK. The segment covering 488–497 has biased composition (basic and acidic residues); it reads SEEKNTDSKK. Positions 547–623 are c; that stretch reads FLIEQKQIAN…LNDIVQKAIL (77 aa).

This sequence belongs to the heat shock protein 90 family. As to quaternary structure, homodimer.

The protein localises to the cytoplasm. In terms of biological role, molecular chaperone. Has ATPase activity. The polypeptide is Chaperone protein HtpG (Rickettsia massiliae (strain Mtu5)).